The sequence spans 735 residues: Trafficking protein particle complex subunit 12 (735 aa).

2 disordered regions span residues Met1–Pro204 and Asn237–Ser276. Residues Pro13 to Ala22 are compositionally biased toward pro residues. Residues Glu34–Thr50 show a composition bias toward acidic residues. Residues Ser109 and Ser184 each carry the phosphoserine modification. 4 TPR repeats span residues Gly545–Gln578, Pro580–Leu613, Ile620–Asn653, and Ala654–His687.

As to quaternary structure, component of the multisubunit TRAPP (transport protein particle) complex, which includes at least TRAPPC2, TRAPPC2L, TRAPPC3, TRAPPC3L, TRAPPC4, TRAPPC5, TRAPPC8, TRAPPC9, TRAPPC10, TRAPPC11 and TRAPPC12. Interacts with CENPE. Post-translationally, phosphorylated as the cells enter mitosis but is dephosphorylated at or before the onset of anaphase. The phosphorylated form recruits CENPE to kinetochores more efficiently than the non-phosphorylated form.

The protein resides in the endoplasmic reticulum-Golgi intermediate compartment. Its subcellular location is the nucleus. Component of the TRAPP complex, which is involved in endoplasmic reticulum to Golgi apparatus trafficking at a very early stage. Also plays a role in chromosome congression, kinetochore assembly and stability and controls the recruitment of CENPE to the kinetochores. This Homo sapiens (Human) protein is Trafficking protein particle complex subunit 12.